The chain runs to 257 residues: Large ribosomal subunit protein uL3 (257 aa).

Residues 232-257 (LKAPKKQKTKVETNQVNPKIEEEKTK) are disordered.

Belongs to the universal ribosomal protein uL3 family. Part of the 50S ribosomal subunit. Forms a cluster with proteins L14 and L19.

One of the primary rRNA binding proteins, it binds directly near the 3'-end of the 23S rRNA, where it nucleates assembly of the 50S subunit. The protein is Large ribosomal subunit protein uL3 of Mycoplasma genitalium (strain ATCC 33530 / DSM 19775 / NCTC 10195 / G37) (Mycoplasmoides genitalium).